A 1135-amino-acid chain; its full sequence is Potassium channel subfamily T member 2 (1135 aa).

The Cytoplasmic portion of the chain corresponds to 1–63; it reads MVDLESEVPP…KNQRSSLRIR (63 aa). A helical membrane pass occupies residues 64–84; that stretch reads LFNFSLKLLSCLLYIIRVLLE. The Extracellular portion of the chain corresponds to 85–101; sequence NPSQGNEWSHIFWVNRS. N-linked (GlcNAc...) asparagine glycosylation is present at N99. A helical transmembrane segment spans residues 102–122; sequence LPLWGLQVSVALISLFETILL. Residues 123–137 are Cytoplasmic-facing; that stretch reads GYLSYKGNIWEQILR. The helical transmembrane segment at 138–158 threads the bilayer; it reads IPFILEIINAVPFIISIFWPS. At 159 to 164 the chain is on the extracellular side; the sequence is LRNLFV. The chain crosses the membrane as a helical span at residues 165 to 185; the sequence is PVFLNCWLAKHALENMINDLH. Topologically, residues 186–198 are cytoplasmic; it reads RAIQRTQSAMFNQ. Residues 199 to 219 form a helical membrane-spanning segment; it reads VLILISTLLCLIFTCICGIQH. Topologically, residues 220–228 are extracellular; it reads LERIGKKLN. Residues 229 to 249 constitute an intramembrane region (pore-forming); that stretch reads LFDSLYFCIVTFSTVGFGDVT. At 250-256 the chain is on the extracellular side; that stretch reads PETWSSK. Residues 257 to 277 traverse the membrane as a helical segment; it reads LFVVAMICVALVVLPIQFEQL. Residues 278–1135 are Cytoplasmic-facing; the sequence is AYLWMERQKS…GQDSREETQL (858 aa). RCK N-terminal domains lie at 299–435 and 718–858; these read EKHV…DHVV and NKLI…CYSL. Disordered stretches follow at residues 977–1010, 1017–1036, and 1113–1135; these read VEEW…HPLL, WARR…AEKI, and SEPS…ETQL. A compositionally biased stretch (basic residues) spans 1017 to 1030; the sequence is WARRLSRKGPKHSG. The span at 1118–1127 shows a compositional bias: polar residues; it reads RNSICNVTGQ.

This sequence belongs to the potassium channel family. Calcium-activated (TC 1.A.1.3) subfamily. KCa4.2/KCNT2 sub-subfamily. As to quaternary structure, homotetramer. Forms heteromeric channels with KCNT1; these heterodimer channels differ from the homomers in their unitary conductance, kinetic behavior, subcellular localization, and response to activation of protein kinase C. Phosphorylated by protein kinase C. Phosphorylation of the C-terminal domain inhibits channel activity.

The protein localises to the cell membrane. It carries out the reaction K(+)(in) = K(+)(out). With respect to regulation, are normally in a closed state unless activated by an increase in intracellular Na(+) and Cl(-). Inhibited upon stimulation of G-protein coupled receptors, such as CHRM1 and GRM1. There is conflicting data about the effect of ATP on KNCT2 channels activity. Intracellular ATP was initially report to inhibit the channel activity. However, others studies conclude that KNCT2 channels are not inhibited by intracellular ATP. In terms of biological role, sodium-activated and chloride-activated potassium channel. Produces rapidly activating outward rectifier K(+) currents. Contributes to regulate neuronal excitability. The protein is Potassium channel subfamily T member 2 (KCNT2) of Homo sapiens (Human).